The primary structure comprises 207 residues: dTTP/UTP pyrophosphatase (207 aa).

Asp-80 serves as the catalytic Proton acceptor.

Belongs to the Maf family. YhdE subfamily. Requires a divalent metal cation as cofactor.

Its subcellular location is the cytoplasm. It catalyses the reaction dTTP + H2O = dTMP + diphosphate + H(+). The enzyme catalyses UTP + H2O = UMP + diphosphate + H(+). In terms of biological role, nucleoside triphosphate pyrophosphatase that hydrolyzes dTTP and UTP. May have a dual role in cell division arrest and in preventing the incorporation of modified nucleotides into cellular nucleic acids. This Agrobacterium fabrum (strain C58 / ATCC 33970) (Agrobacterium tumefaciens (strain C58)) protein is dTTP/UTP pyrophosphatase (maf1).